Reading from the N-terminus, the 1173-residue chain is Pyruvate-flavodoxin oxidoreductase (1173 aa).

2 4Fe-4S ferredoxin-type domains span residues Asn681 to Ile710 and Tyr735 to Leu766. Cys690, Cys693, Cys696, Cys700, Cys744, Cys747, Cys750, Cys754, Cys810, Cys813, and Cys838 together coordinate [4Fe-4S] cluster. Residues Gly922–Gly933 show a composition bias toward basic and acidic residues. Positions Gly922–Arg946 are disordered. Cys1075 serves as a coordination point for [4Fe-4S] cluster.

It belongs to the pyruvate:ferredoxin/flavodoxin oxidoreductase family. Requires [4Fe-4S] cluster as cofactor.

It catalyses the reaction oxidized [flavodoxin] + pyruvate + CoA + 2 H(+) = reduced [flavodoxin] + acetyl-CoA + CO2. In terms of biological role, oxidoreductase required for the transfer of electrons from pyruvate to flavodoxin, which reduces nitrogenase. The chain is Pyruvate-flavodoxin oxidoreductase (nifJ) from Enterobacter agglomerans (Erwinia herbicola).